A 344-amino-acid polypeptide reads, in one-letter code: Dihydroorotase (344 aa).

Zn(2+) contacts are provided by H13 and H15. Substrate contacts are provided by residues 15 to 17 (HFR) and N41. 3 residues coordinate Zn(2+): K98, H135, and H173. An N6-carboxylysine modification is found at K98. Residue H135 coordinates substrate. L218 is a binding site for substrate. Zn(2+) is bound at residue D246. The active site involves D246. Residues H250 and A262 each contribute to the substrate site.

The protein belongs to the metallo-dependent hydrolases superfamily. DHOase family. Class II DHOase subfamily. As to quaternary structure, homodimer. It depends on Zn(2+) as a cofactor.

The enzyme catalyses (S)-dihydroorotate + H2O = N-carbamoyl-L-aspartate + H(+). Its pathway is pyrimidine metabolism; UMP biosynthesis via de novo pathway; (S)-dihydroorotate from bicarbonate: step 3/3. Catalyzes the reversible cyclization of carbamoyl aspartate to dihydroorotate. In Shewanella woodyi (strain ATCC 51908 / MS32), this protein is Dihydroorotase.